A 92-amino-acid chain; its full sequence is CRISPR-associated endoribonuclease Cas2 3 (92 aa).

Residue Asp-9 coordinates Mg(2+).

Belongs to the CRISPR-associated endoribonuclease Cas2 protein family. Homodimer, forms a heterotetramer with a Cas1 homodimer. Mg(2+) is required as a cofactor.

Its function is as follows. CRISPR (clustered regularly interspaced short palindromic repeat), is an adaptive immune system that provides protection against mobile genetic elements (viruses, transposable elements and conjugative plasmids). CRISPR clusters contain sequences complementary to antecedent mobile elements and target invading nucleic acids. CRISPR clusters are transcribed and processed into CRISPR RNA (crRNA). Functions as a ssRNA-specific endoribonuclease. Involved in the integration of spacer DNA into the CRISPR cassette. In Synechocystis sp. (strain ATCC 27184 / PCC 6803 / Kazusa), this protein is CRISPR-associated endoribonuclease Cas2 3.